The chain runs to 455 residues: Bleomycin hydrolase (455 aa).

Residues Cys73, His372, and Asn396 contribute to the active site.

It belongs to the peptidase C1 family. As to quaternary structure, homooctamer.

The protein resides in the cytoplasm. It catalyses the reaction Inactivates bleomycin B2 (a cytotoxic glycometallopeptide) by hydrolysis of a carboxyamide bond of beta-aminoalanine, but also shows general aminopeptidase activity. The specificity varies somewhat with source, but amino acid arylamides of Met, Leu and Ala are preferred.. The normal physiological role of BLM hydrolase is unknown, but it catalyzes the inactivation of the antitumor drug BLM (a glycopeptide) by hydrolyzing the carboxamide bond of its B-aminoalaninamide moiety thus protecting normal and malignant cells from BLM toxicity. The protein is Bleomycin hydrolase (BLMH) of Gallus gallus (Chicken).